Consider the following 131-residue polypeptide: Protein Turandot M (131 aa).

Residues methionine 1 to alanine 23 form the signal peptide.

Belongs to the Turandot family.

Its subcellular location is the secreted. In terms of biological role, a humoral factor that may play a role in stress tolerance. Requires Mekk1 expression in the fat body to regulate response to septic injury and consequent immune response. This Drosophila melanogaster (Fruit fly) protein is Protein Turandot M.